We begin with the raw amino-acid sequence, 136 residues long: Large ribosomal subunit protein uL16 (136 aa).

This sequence belongs to the universal ribosomal protein uL16 family. In terms of assembly, part of the 50S ribosomal subunit.

Binds 23S rRNA and is also seen to make contacts with the A and possibly P site tRNAs. In Citrobacter koseri (strain ATCC BAA-895 / CDC 4225-83 / SGSC4696), this protein is Large ribosomal subunit protein uL16.